A 157-amino-acid polypeptide reads, in one-letter code: 2-C-methyl-D-erythritol 2,4-cyclodiphosphate synthase (157 aa).

The a divalent metal cation site is built by Asp-8 and His-10. 4-CDP-2-C-methyl-D-erythritol 2-phosphate contacts are provided by residues 8–10 (DVH) and 34–35 (HS). Position 42 (His-42) interacts with a divalent metal cation. Residues 56 to 58 (DIG), 61 to 65 (FPDTD), 132 to 135 (TTTE), Phe-139, and Arg-142 each bind 4-CDP-2-C-methyl-D-erythritol 2-phosphate.

Belongs to the IspF family. Homotrimer. The cofactor is a divalent metal cation.

The enzyme catalyses 4-CDP-2-C-methyl-D-erythritol 2-phosphate = 2-C-methyl-D-erythritol 2,4-cyclic diphosphate + CMP. It participates in isoprenoid biosynthesis; isopentenyl diphosphate biosynthesis via DXP pathway; isopentenyl diphosphate from 1-deoxy-D-xylulose 5-phosphate: step 4/6. In terms of biological role, involved in the biosynthesis of isopentenyl diphosphate (IPP) and dimethylallyl diphosphate (DMAPP), two major building blocks of isoprenoid compounds. Catalyzes the conversion of 4-diphosphocytidyl-2-C-methyl-D-erythritol 2-phosphate (CDP-ME2P) to 2-C-methyl-D-erythritol 2,4-cyclodiphosphate (ME-CPP) with a corresponding release of cytidine 5-monophosphate (CMP). This Geotalea uraniireducens (strain Rf4) (Geobacter uraniireducens) protein is 2-C-methyl-D-erythritol 2,4-cyclodiphosphate synthase.